The chain runs to 241 residues: GTP cyclohydrolase 1 (241 aa).

A propeptide spanning residues 1–11 is cleaved from the precursor; the sequence is MEKPRGVRCTN. Positions 1–58 are disordered; it reads MEKPRGVRCTNGFPERELPRPGASRPAEKSRPPEAKGAQPADAWKAGRPRSEEDNELN. Ser51 and Ser72 each carry phosphoserine. Zn(2+) contacts are provided by Cys132, His135, and Cys203.

It belongs to the GTP cyclohydrolase I family. As to quaternary structure, toroid-shaped homodecamer, composed of two pentamers of five dimers. Interacts with AHSA1 and GCHFR/GFRP. Post-translationally, phosphorylated.

The protein localises to the cytoplasm. It is found in the nucleus. It catalyses the reaction GTP + H2O = 7,8-dihydroneopterin 3'-triphosphate + formate + H(+). It functions in the pathway cofactor biosynthesis; 7,8-dihydroneopterin triphosphate biosynthesis; 7,8-dihydroneopterin triphosphate from GTP: step 1/1. Its activity is regulated as follows. GTP shows a positive allosteric effect, and tetrahydrobiopterin inhibits the enzyme activity. Zinc is required for catalytic activity. Inhibited by Mg(2+). In terms of biological role, may positively regulate nitric oxide synthesis in endothelial cells. May be involved in dopamine synthesis. May modify pain sensitivity and persistence. This is GTP cyclohydrolase 1 (Gch1) from Rattus norvegicus (Rat).